A 559-amino-acid chain; its full sequence is MEAAAQFFVESPDVVYGPEAIEAQYEYRTTRVSREGGVLKVHPTSTRFTFRTARQVPRLGVMLVGWGGNNGSTLTAAVLANRLRLSWPTRSGRKEANYYGSLTQAGTVSLGLDAEGQEVFVPFSALLPMVAPNDLVFDGWDISSLNLAEAMRRAKVLDWGLQEQLWPHMEALRPRPSVYIPEFIAANQSARADNLIPGSRAQQLEQIRRDIRDFRSSAGLDKIIVLWTANTERFCEVIPGLNDTAENLLRTIELGLEVSPSTLFAVASILEGCAFLNGSPQNTLVPGALELAWQRRVFVGGDDFKSGQTKVKSVLVDFLIGSGLKTMSIVSYNHLGNNDGENLSAPLQFRSKEVSKSNVVDDMVQSNPVLYAPGEEPDHCVVIKYVPYVGDSKRALDEYTSELMLGGTNTLVLHNTCEDSLLAAPIMLDLALLTELCQRVSFCTDADPEPQTFHPVLSLLSFLFKAPLVPPGSPVVNALFRQRSCIENILRACLGLPPQNHMLLEHKMERPGPVLKRVGPVAAACPVLNKKGPVPAATNGCTGDANGHLQVEEPQMPTT.

NAD(+) contacts are provided by G67, G68, N69, N70, D141, S177, V178, Q188, R191, T228, A229, N230, T231, G278, S279, D303, S306, N337, N338, D339, and K352. A Phosphoserine modification is found at S279. Position 357 is a phosphoserine (S357). The NAD(+) site is built by G390, D391, D419, and S420.

It belongs to the myo-inositol 1-phosphate synthase family. NAD(+) serves as cofactor.

It localises to the cytoplasm. The enzyme catalyses D-glucose 6-phosphate = 1D-myo-inositol 3-phosphate. Its pathway is polyol metabolism; myo-inositol biosynthesis; myo-inositol from D-glucose 6-phosphate: step 1/2. In terms of biological role, key enzyme in myo-inositol biosynthesis pathway that catalyzes the conversion of glucose 6-phosphate to 1-myo-inositol 1-phosphate in a NAD-dependent manner. Rate-limiting enzyme in the synthesis of all inositol-containing compounds. This chain is Inositol-3-phosphate synthase 1 (ISYNA1), found in Macaca fascicularis (Crab-eating macaque).